The chain runs to 467 residues: Putative laccase-16 (467 aa).

Plastocyanin-like domains lie at V7 to G88, K98 to S225, and D318 to K451. Residues H22, H24, H67, and H69 each contribute to the Cu cation site. Residues H368, H371, H373, H430, C431, H432, H436, and M441 each coordinate Cu cation.

The protein belongs to the multicopper oxidase family. Requires Cu cation as cofactor.

The protein resides in the secreted. Its subcellular location is the extracellular space. It is found in the apoplast. It carries out the reaction 4 hydroquinone + O2 = 4 benzosemiquinone + 2 H2O. Functionally, lignin degradation and detoxification of lignin-derived products. In Oryza sativa subsp. japonica (Rice), this protein is Putative laccase-16 (LAC16).